Reading from the N-terminus, the 331-residue chain is GTP 3',8-cyclase (331 aa).

Residues 1 to 231 (MNAVDYLRIS…DGQVQGNGPA (231 aa)) form the Radical SAM core domain. Arginine 8 serves as a coordination point for GTP. [4Fe-4S] cluster is bound by residues cysteine 15 and cysteine 19. Position 21 (tyrosine 21) interacts with S-adenosyl-L-methionine. Cysteine 22 contributes to the [4Fe-4S] cluster binding site. Arginine 60 is a GTP binding site. Position 64 (glycine 64) interacts with S-adenosyl-L-methionine. Threonine 91 is a GTP binding site. Serine 115 contacts S-adenosyl-L-methionine. Residue lysine 157 participates in GTP binding. An S-adenosyl-L-methionine-binding site is contributed by methionine 191. Cysteine 254 and cysteine 257 together coordinate [4Fe-4S] cluster. Position 259-261 (259-261 (RMR)) interacts with GTP. [4Fe-4S] cluster is bound at residue cysteine 271.

It belongs to the radical SAM superfamily. MoaA family. As to quaternary structure, monomer and homodimer. Requires [4Fe-4S] cluster as cofactor.

The catalysed reaction is GTP + AH2 + S-adenosyl-L-methionine = (8S)-3',8-cyclo-7,8-dihydroguanosine 5'-triphosphate + 5'-deoxyadenosine + L-methionine + A + H(+). Its pathway is cofactor biosynthesis; molybdopterin biosynthesis. Functionally, catalyzes the cyclization of GTP to (8S)-3',8-cyclo-7,8-dihydroguanosine 5'-triphosphate. The polypeptide is GTP 3',8-cyclase (Acaryochloris marina (strain MBIC 11017)).